The primary structure comprises 429 residues: tRNA-2-methylthio-N(6)-dimethylallyladenosine synthase (429 aa).

The 114-residue stretch at 2 to 115 folds into the MTTase N-terminal domain; sequence KLLYLQTLGC…ISEAVKTPKF (114 aa). [4Fe-4S] cluster-binding residues include Cys-11, Cys-46, Cys-78, Cys-147, Cys-151, and Cys-154. The 233-residue stretch at 133 to 365 folds into the Radical SAM core domain; sequence RGSPYKAFVN…QSRHNEILDE (233 aa). Positions 368-429 constitute a TRAM domain; it reads KNQVGKIFDV…RMVLYGKITA (62 aa).

Belongs to the methylthiotransferase family. MiaB subfamily. As to quaternary structure, monomer. Requires [4Fe-4S] cluster as cofactor.

It is found in the cytoplasm. The catalysed reaction is N(6)-dimethylallyladenosine(37) in tRNA + (sulfur carrier)-SH + AH2 + 2 S-adenosyl-L-methionine = 2-methylsulfanyl-N(6)-dimethylallyladenosine(37) in tRNA + (sulfur carrier)-H + 5'-deoxyadenosine + L-methionine + A + S-adenosyl-L-homocysteine + 2 H(+). In terms of biological role, catalyzes the methylthiolation of N6-(dimethylallyl)adenosine (i(6)A), leading to the formation of 2-methylthio-N6-(dimethylallyl)adenosine (ms(2)i(6)A) at position 37 in tRNAs that read codons beginning with uridine. The protein is tRNA-2-methylthio-N(6)-dimethylallyladenosine synthase of Campylobacter hominis (strain ATCC BAA-381 / DSM 21671 / CCUG 45161 / LMG 19568 / NCTC 13146 / CH001A).